Consider the following 643-residue polypeptide: Nucleolar GTP-binding protein 1 (643 aa).

Positions 168–340 (RTLLICGYPN…VRNKACEKLL (173 aa)) constitute an OBG-type G domain. GTP contacts are provided by residues 174-181 (GYPNVGKS), 220-224 (DTPGI), and 288-291 (NKTD). Positions 568–643 (GDQEDSAPAG…KRGVGKTDFR (76 aa)) are disordered. The span at 594 to 622 (MRSKAERMAKLERRERNRMARAGESDRHA) shows a compositional bias: basic and acidic residues.

This sequence belongs to the TRAFAC class OBG-HflX-like GTPase superfamily. OBG GTPase family. NOG subfamily.

The protein resides in the nucleus. It localises to the nucleolus. In terms of biological role, involved in the biogenesis of the 60S ribosomal subunit. The protein is Nucleolar GTP-binding protein 1 (NOG1) of Kluyveromyces lactis (strain ATCC 8585 / CBS 2359 / DSM 70799 / NBRC 1267 / NRRL Y-1140 / WM37) (Yeast).